We begin with the raw amino-acid sequence, 504 residues long: Maturase K (504 aa).

It belongs to the intron maturase 2 family. MatK subfamily.

Its subcellular location is the plastid. The protein resides in the chloroplast. Functionally, usually encoded in the trnK tRNA gene intron. Probably assists in splicing its own and other chloroplast group II introns. This chain is Maturase K, found in Erythrina crista-galli (Cockspur coral tree).